A 116-amino-acid chain; its full sequence is Large ribosomal subunit protein uL18 (116 aa).

It belongs to the universal ribosomal protein uL18 family. In terms of assembly, part of the 50S ribosomal subunit; part of the 5S rRNA/L5/L18/L25 subcomplex. Contacts the 5S and 23S rRNAs.

This is one of the proteins that bind and probably mediate the attachment of the 5S RNA into the large ribosomal subunit, where it forms part of the central protuberance. The protein is Large ribosomal subunit protein uL18 of Acholeplasma laidlawii (strain PG-8A).